Consider the following 242-residue polypeptide: Small ribosomal subunit protein eS4 (242 aa).

The region spanning 43 to 106 (LPLMIIVRDI…GDVYRVLPDE (64 aa)) is the S4 RNA-binding domain.

This sequence belongs to the eukaryotic ribosomal protein eS4 family.

This chain is Small ribosomal subunit protein eS4 (rps4e), found in Methanothermobacter thermautotrophicus (strain ATCC 29096 / DSM 1053 / JCM 10044 / NBRC 100330 / Delta H) (Methanobacterium thermoautotrophicum).